We begin with the raw amino-acid sequence, 390 residues long: MINRVVLFIMDSVGIGALPDADQFGDVGSNTLGNISKVEQGIALPNLTALGLGNIEDIQGVNPVESPKGAYGKSAEVSNGKDTTTGHWELVGLEVTEPFNTYPQGFPADVVENFEKQIGRKMLGNKPASGTVILDELGKEHMQTGHPIVYTSADSVFQIAAHEEVILLGELYKMCEIAREIMRGDHAVARVIARPFVGDPGNFIRTSNRRDYSLDPFGKTLLDIAKEAGKDVIGIGKIEDIFNGNGITEAIHTKDNMDGIDQTIAYLKKENKGIIFTNLVDFDSKYGHRRDPKGYKQALEEMDRRIPEILSHLNDEDLIIFTADHGNDPTFKGSDHTREYIPIVIYGKQVKAGVNIGTRKSFADIAATISDILNIDDTGNGESFKKFILE.

Mn(2+) contacts are provided by aspartate 11, aspartate 283, histidine 288, aspartate 324, histidine 325, and histidine 336.

The protein belongs to the phosphopentomutase family. The cofactor is Mn(2+).

It is found in the cytoplasm. It catalyses the reaction 2-deoxy-alpha-D-ribose 1-phosphate = 2-deoxy-D-ribose 5-phosphate. The enzyme catalyses alpha-D-ribose 1-phosphate = D-ribose 5-phosphate. Its pathway is carbohydrate degradation; 2-deoxy-D-ribose 1-phosphate degradation; D-glyceraldehyde 3-phosphate and acetaldehyde from 2-deoxy-alpha-D-ribose 1-phosphate: step 1/2. Functionally, isomerase that catalyzes the conversion of deoxy-ribose 1-phosphate (dRib-1-P) and ribose 1-phosphate (Rib-1-P) to deoxy-ribose 5-phosphate (dRib-5-P) and ribose 5-phosphate (Rib-5-P), respectively. In Alkaliphilus metalliredigens (strain QYMF), this protein is Phosphopentomutase.